The chain runs to 367 residues: Regulator of fusion ref-1 (367 aa).

Residues 1 to 10 (MVLISTPPPA) are compositionally biased toward pro residues. The tract at residues 1-24 (MVLISTPPPAYAHNRKTSQEKKRR) is disordered. A basic motif 1 region spans residues 11 to 24 (YAHNRKTSQEKKRR). Residues 11 to 63 (YAHNRKTSQEKKRRDEINAKIKELQLLIQNESDNEKMTQGDVLNRAVEVVSRM) enclose the bHLH 1 domain. The interval 25-63 (DEINAKIKELQLLIQNESDNEKMTQGDVLNRAVEVVSRM) is helix-loop-helix motif 1. Disordered stretches follow at residues 133–177 (RSES…RRDR) and 313–367 (ATSP…RPWE). Residues 141–157 (SSMSYRSQSSSPSTSES) are compositionally biased toward low complexity. A compositionally biased stretch (basic and acidic residues) spans 161 to 177 (IDRKEVKKNREQDRRDR). A basic motif 2 region spans residues 162–175 (DRKEVKKNREQDRR). The region spanning 162–219 (DRKEVKKNREQDRRDRQGEAFDALKNFIIENKLMTSHQVEKMQRLNTLDIIIAYIQNK) is the bHLH 2 domain. A helix-loop-helix motif 2 region spans residues 176 to 219 (DRQGEAFDALKNFIIENKLMTSHQVEKMQRLNTLDIIIAYIQNK). Low complexity predominate over residues 313–354 (ATSPKSQQSPSYSLDSPPPSSDTSSSSIETPSTPNENSNSNP). Residues 356-367 (ASRKSKLFRPWE) are compositionally biased toward basic residues.

Interacts with unc-37.

The protein localises to the nucleus. Functionally, probable transcription factor. Binds 5'-TGCCACGTGTCCA-3' in vitro, probably via the E-box motif 5'-CA[TC][AG]TG-3'. Acts in embryonic development in a Notch-dependent manner, perhaps as a direct target of transcriptional regulator lag-1 in the Notch signaling pathway. Also acts in embryonic development in a Notch-independent manner. Plays a role in both Notch-dependent and -independent pathways in the execution of neuronal lineage decisions in the embryo. Also involved in regulating cell fate leading to formation of neuronal structures known as postdeirids. Involved in the pattern of cell fusion with a large syncytium known as hyp-7, during larval development, in hermaphrodites. Plays a role in regulating the activity of homeobox protein mab-5 in Pn.p cells. The polypeptide is Regulator of fusion ref-1 (Caenorhabditis elegans).